Reading from the N-terminus, the 188-residue chain is UPF0398 protein SE_1135 (188 aa).

It belongs to the UPF0398 family.

In Staphylococcus epidermidis (strain ATCC 12228 / FDA PCI 1200), this protein is UPF0398 protein SE_1135.